We begin with the raw amino-acid sequence, 82 residues long: Small ribosomal subunit protein bS20 (82 aa).

Belongs to the bacterial ribosomal protein bS20 family.

In terms of biological role, binds directly to 16S ribosomal RNA. The protein is Small ribosomal subunit protein bS20 of Lysinibacillus sphaericus (strain C3-41).